Reading from the N-terminus, the 115-residue chain is NADH-ubiquinone oxidoreductase chain 3 (115 aa).

3 helical membrane passes run 3–23 (FVLILMTNTLLALLLMIITFW), 55–75 (FFLVAITFLLFDLEIALLLPL), and 84–104 (LPLMVTSSLLLITILALSLAY).

The protein belongs to the complex I subunit 3 family. In terms of assembly, core subunit of respiratory chain NADH dehydrogenase (Complex I) which is composed of 45 different subunits. Interacts with TMEM186. Interacts with TMEM242.

It is found in the mitochondrion inner membrane. It catalyses the reaction a ubiquinone + NADH + 5 H(+)(in) = a ubiquinol + NAD(+) + 4 H(+)(out). Core subunit of the mitochondrial membrane respiratory chain NADH dehydrogenase (Complex I) which catalyzes electron transfer from NADH through the respiratory chain, using ubiquinone as an electron acceptor. Essential for the catalytic activity of complex I. The protein is NADH-ubiquinone oxidoreductase chain 3 of Pan troglodytes (Chimpanzee).